Reading from the N-terminus, the 95-residue chain is DNA-directed RNA polymerase subunit Rpo11 (95 aa).

This sequence belongs to the archaeal Rpo11/eukaryotic RPB11/RPC19 RNA polymerase subunit family. In terms of assembly, part of the RNA polymerase complex.

The protein localises to the cytoplasm. The enzyme catalyses RNA(n) + a ribonucleoside 5'-triphosphate = RNA(n+1) + diphosphate. In terms of biological role, DNA-dependent RNA polymerase (RNAP) catalyzes the transcription of DNA into RNA using the four ribonucleoside triphosphates as substrates. The chain is DNA-directed RNA polymerase subunit Rpo11 from Pyrococcus abyssi (strain GE5 / Orsay).